Here is a 241-residue protein sequence, read N- to C-terminus: F-box protein At3g22350 (241 aa).

In terms of domain architecture, F-box spans 1 to 44 (MSDLPLDLVEEILSRVSATSLKRLRSTCKQWNTLFKKRSFSQKH).

The polypeptide is F-box protein At3g22350 (Arabidopsis thaliana (Mouse-ear cress)).